The sequence spans 261 residues: MTHQTHAYHMVNPSPWPLTGALSALLLTSGLVMWFHYNSTILLSLGLLTNILTMYQWWRDIIREGTYQGHHTPIVQKGLRYGMILFIVSEVFFFAGFFWAFYHSSLVPTHDLGGCWPPTGITPLNPLEVPLLNTSVLLASGVSITWAHHSLMEGNRNHMNQALLITILLGLYFTILQASEYFETSFSISDGIYGSTFFMATGFHGLHVIIGSTFLIVCLLRQLKFHFTSKHHFGFEAAAWYWHFVDVVWLFLYVSIYWWGS.

At 2 to 15 the chain is on the mitochondrial matrix side; it reads THQTHAYHMVNPSP. A helical membrane pass occupies residues 16–34; sequence WPLTGALSALLLTSGLVMW. The Mitochondrial intermembrane portion of the chain corresponds to 35–40; that stretch reads FHYNST. Residues 41 to 66 form a helical membrane-spanning segment; sequence ILLSLGLLTNILTMYQWWRDIIREGT. Residues 67–72 lie on the Mitochondrial matrix side of the membrane; that stretch reads YQGHHT. Residues 73–105 form a helical membrane-spanning segment; that stretch reads PIVQKGLRYGMILFIVSEVFFFAGFFWAFYHSS. Over 106–128 the chain is Mitochondrial intermembrane; sequence LVPTHDLGGCWPPTGITPLNPLE. A helical transmembrane segment spans residues 129–152; the sequence is VPLLNTSVLLASGVSITWAHHSLM. At 153–155 the chain is on the mitochondrial matrix side; it reads EGN. A helical transmembrane segment spans residues 156 to 183; it reads RNHMNQALLITILLGLYFTILQASEYFE. At 184-190 the chain is on the mitochondrial intermembrane side; it reads TSFSISD. The chain crosses the membrane as a helical span at residues 191–223; that stretch reads GIYGSTFFMATGFHGLHVIIGSTFLIVCLLRQL. The Mitochondrial matrix portion of the chain corresponds to 224–232; sequence KFHFTSKHH. The helical transmembrane segment at 233–256 threads the bilayer; it reads FGFEAAAWYWHFVDVVWLFLYVSI. Residues 257-261 are Mitochondrial intermembrane-facing; that stretch reads YWWGS.

Belongs to the cytochrome c oxidase subunit 3 family. As to quaternary structure, component of the cytochrome c oxidase (complex IV, CIV), a multisubunit enzyme composed of 14 subunits. The complex is composed of a catalytic core of 3 subunits MT-CO1, MT-CO2 and MT-CO3, encoded in the mitochondrial DNA, and 11 supernumerary subunits COX4I, COX5A, COX5B, COX6A, COX6B, COX6C, COX7A, COX7B, COX7C, COX8 and NDUFA4, which are encoded in the nuclear genome. The complex exists as a monomer or a dimer and forms supercomplexes (SCs) in the inner mitochondrial membrane with NADH-ubiquinone oxidoreductase (complex I, CI) and ubiquinol-cytochrome c oxidoreductase (cytochrome b-c1 complex, complex III, CIII), resulting in different assemblies (supercomplex SCI(1)III(2)IV(1) and megacomplex MCI(2)III(2)IV(2)).

The protein resides in the mitochondrion inner membrane. It carries out the reaction 4 Fe(II)-[cytochrome c] + O2 + 8 H(+)(in) = 4 Fe(III)-[cytochrome c] + 2 H2O + 4 H(+)(out). In terms of biological role, component of the cytochrome c oxidase, the last enzyme in the mitochondrial electron transport chain which drives oxidative phosphorylation. The respiratory chain contains 3 multisubunit complexes succinate dehydrogenase (complex II, CII), ubiquinol-cytochrome c oxidoreductase (cytochrome b-c1 complex, complex III, CIII) and cytochrome c oxidase (complex IV, CIV), that cooperate to transfer electrons derived from NADH and succinate to molecular oxygen, creating an electrochemical gradient over the inner membrane that drives transmembrane transport and the ATP synthase. Cytochrome c oxidase is the component of the respiratory chain that catalyzes the reduction of oxygen to water. Electrons originating from reduced cytochrome c in the intermembrane space (IMS) are transferred via the dinuclear copper A center (CU(A)) of subunit 2 and heme A of subunit 1 to the active site in subunit 1, a binuclear center (BNC) formed by heme A3 and copper B (CU(B)). The BNC reduces molecular oxygen to 2 water molecules using 4 electrons from cytochrome c in the IMS and 4 protons from the mitochondrial matrix. The polypeptide is Cytochrome c oxidase subunit 3 (Rattus norvegicus (Rat)).